Reading from the N-terminus, the 54-residue chain is Large ribosomal subunit protein bL33 (54 aa).

The protein belongs to the bacterial ribosomal protein bL33 family.

This is Large ribosomal subunit protein bL33 from Buchnera aphidicola subsp. Cinara cedri (strain Cc).